We begin with the raw amino-acid sequence, 491 residues long: Protein nucleotidyltransferase YdiU (491 aa).

ATP is bound by residues Gly-92, Gly-94, Arg-95, Lys-115, Asp-127, Gly-128, Arg-178, and Arg-185. The Proton acceptor role is filled by Asp-254. Asn-255 and Asp-264 together coordinate Mg(2+). Residue Asp-264 coordinates ATP.

It belongs to the SELO family. Mg(2+) serves as cofactor. The cofactor is Mn(2+).

The catalysed reaction is L-seryl-[protein] + ATP = 3-O-(5'-adenylyl)-L-seryl-[protein] + diphosphate. The enzyme catalyses L-threonyl-[protein] + ATP = 3-O-(5'-adenylyl)-L-threonyl-[protein] + diphosphate. It carries out the reaction L-tyrosyl-[protein] + ATP = O-(5'-adenylyl)-L-tyrosyl-[protein] + diphosphate. It catalyses the reaction L-histidyl-[protein] + UTP = N(tele)-(5'-uridylyl)-L-histidyl-[protein] + diphosphate. The catalysed reaction is L-seryl-[protein] + UTP = O-(5'-uridylyl)-L-seryl-[protein] + diphosphate. The enzyme catalyses L-tyrosyl-[protein] + UTP = O-(5'-uridylyl)-L-tyrosyl-[protein] + diphosphate. Its function is as follows. Nucleotidyltransferase involved in the post-translational modification of proteins. It can catalyze the addition of adenosine monophosphate (AMP) or uridine monophosphate (UMP) to a protein, resulting in modifications known as AMPylation and UMPylation. In Mycolicibacterium paratuberculosis (strain ATCC BAA-968 / K-10) (Mycobacterium paratuberculosis), this protein is Protein nucleotidyltransferase YdiU.